The primary structure comprises 343 residues: N-acetyl-gamma-glutamyl-phosphate reductase (343 aa).

Residue C147 is part of the active site.

Belongs to the NAGSA dehydrogenase family. Type 1 subfamily.

It is found in the cytoplasm. The enzyme catalyses N-acetyl-L-glutamate 5-semialdehyde + phosphate + NADP(+) = N-acetyl-L-glutamyl 5-phosphate + NADPH + H(+). The protein operates within amino-acid biosynthesis; L-arginine biosynthesis; N(2)-acetyl-L-ornithine from L-glutamate: step 3/4. Functionally, catalyzes the NADPH-dependent reduction of N-acetyl-5-glutamyl phosphate to yield N-acetyl-L-glutamate 5-semialdehyde. This is N-acetyl-gamma-glutamyl-phosphate reductase from Listeria innocua serovar 6a (strain ATCC BAA-680 / CLIP 11262).